Reading from the N-terminus, the 343-residue chain is Glyceraldehyde-3-phosphate dehydrogenase 1 (343 aa).

Residues 13-14, D35, R79, and S121 each bind NAD(+); that span reads RI. Residues 154 to 156, T185, 214 to 215, and R237 contribute to the D-glyceraldehyde 3-phosphate site; these read SCT and TG. The Nucleophile role is filled by C155. N319 lines the NAD(+) pocket.

This sequence belongs to the glyceraldehyde-3-phosphate dehydrogenase family. As to quaternary structure, homotetramer.

It localises to the cytoplasm. The enzyme catalyses D-glyceraldehyde 3-phosphate + phosphate + NAD(+) = (2R)-3-phospho-glyceroyl phosphate + NADH + H(+). The protein operates within carbohydrate degradation; glycolysis; pyruvate from D-glyceraldehyde 3-phosphate: step 1/5. Its function is as follows. Catalyzes the oxidative phosphorylation of glyceraldehyde 3-phosphate (G3P) to 1,3-bisphosphoglycerate (BPG) using the cofactor NAD. The first reaction step involves the formation of a hemiacetal intermediate between G3P and a cysteine residue, and this hemiacetal intermediate is then oxidized to a thioester, with concomitant reduction of NAD to NADH. The reduced NADH is then exchanged with the second NAD, and the thioester is attacked by a nucleophilic inorganic phosphate to produce BPG. This chain is Glyceraldehyde-3-phosphate dehydrogenase 1 (gap1), found in Trichormus variabilis (strain ATCC 29413 / PCC 7937) (Anabaena variabilis).